A 2713-amino-acid chain; its full sequence is Histone-lysine N-methyltransferase 2B (2713 aa).

Positions 1–11 (MAAAAGGGSCP) are enriched in gly residues. Disordered regions lie at residues 1–65 (MAAA…GEDT), 82–524 (RLWA…PTVV), and 542–783 (VSAR…ARVA). Position 2 is an N-acetylalanine (alanine 2). A compositionally biased stretch (low complexity) spans 12–24 (GPGSARGRFPGRP). The Menin-binding motif (MBM) signature appears at 17–36 (RGRFPGRPRGSGGGGGRGGR). Gly residues-rich tracts occupy residues 25–38 (RGSGGGGGRGGRGN) and 49–60 (RGGGAAGPGGAE). The segment at residues 37–44 (GNGAERVR) is a DNA-binding region (a.T hook 1). The segment covering 109-123 (PEEESSDGESEEEEF) has biased composition (acidic residues). A DNA-binding region (a.T hook 2) is located at residues 110-117 (EEESSDGE). Phosphoserine occurs at positions 113, 114, and 118. A compositionally biased stretch (basic residues) spans 144 to 158 (QRGRAPRGRGRKHKT). Positions 340–360 (PQRKDGDEPERGSCRKKQEQK) are enriched in basic and acidic residues. The a.T hook 3 DNA-binding region spans 357 to 365 (QEQKLEEEE). A compositionally biased stretch (acidic residues) spans 361-393 (LEEEEEEEEKEGEEKEEKDDNEDNNKQEEEEET). Positions 394 to 412 (ERAVAEEEAMLAKEKEEAK) are enriched in basic and acidic residues. Residues 414-460 (PSPPLTPPVPSPPPPLPPPSTSPPPPASPLPPPVSPPPPLSPPPYPA) are compositionally biased toward pro residues. Residues 501–517 (GTLSPTPNPSTTTGSPL) are compositionally biased toward low complexity. A compositionally biased stretch (basic and acidic residues) spans 555–566 (RFMDEDPPKPPK). Over residues 577 to 605 (ATSPPAPQEPVPVSSPPRVPTPPSTPVPL) the composition is skewed to pro residues. The segment covering 606 to 617 (PEKRRSILREPT) has biased composition (basic and acidic residues). Over residues 627 to 645 (LPPPPPAPPPAPSPPPAPA) the composition is skewed to pro residues. 3 stretches are compositionally biased toward low complexity: residues 646–657 (TPSRRPLLLRAP), 715–728 (VPVVTSPVKVEVPP), and 738–756 (QQLQLQQPPQALQTQLLPQ). The span at 757 to 774 (ALPPQQPQAQPPPSPQHT) shows a compositional bias: pro residues. Lysine 810 participates in a covalent cross-link: Glycyl lysine isopeptide (Lys-Gly) (interchain with G-Cter in SUMO2). A phosphoserine mark is found at serine 826, serine 849, and serine 866. 2 disordered regions span residues 831–872 (TEEA…QGPR) and 899–964 (SALP…HHGK). Residues 841–862 (TPDRGCVRSEDESMEAKRDRAS) show a composition bias toward basic and acidic residues. Positions 912-922 (EDTSSASETES) are enriched in low complexity. Serine 941 bears the Phosphoserine mark. Positions 953–964 (TPRRSLPSHHGK) are enriched in basic residues. The segment at 964–1011 (KKMRMARCGHCRGCLRVQDCGSCVNCLDKPKFGGPNTKKQCCVYRKCD) adopts a CXXC-type zinc-finger fold. Positions 971, 974, 977, 983, 986, 989, 1005, and 1010 each coordinate Zn(2+). Disordered stretches follow at residues 1032-1076 (LLPW…DSLL) and 1088-1138 (QRPS…LQPV). Residues serine 1037, serine 1040, serine 1098, and serine 1101 each carry the phosphoserine modification. Lysine 1142 is covalently cross-linked (Glycyl lysine isopeptide (Lys-Gly) (interchain with G-Cter in SUMO2)). 3 consecutive PHD-type zinc fingers follow at residues 1207–1258 (PMVC…CKFC), 1255–1309 (CKFC…CVRC), and 1341–1402 (GNYC…CAGA). Positions 1410 to 1510 (ALSGALQGGL…GLLLKLLESA (101 aa)) constitute a Bromo domain. Positions 1550-1572 (RQQESETPESGQPPGDPSAAFQS) are disordered. The C2HC pre-PHD-type zinc-finger motif lies at 1584-1624 (PRQCALCLKYGDADSKEAGRLLYIGQNEWTHVNCAIWSAEV). Residues 1645–1692 (MRCELCLKPGATVGCCLSSCLSNFHFMCARASYCIFQDDKKVFCQKHT) form a PHD-type 4 zinc finger. In terms of domain architecture, FYR N-terminal spans 1733 to 1789 (VINVLIGSIRINSLGTLSDLSDCEGRLFPIGYQCSRLYWSTVDARRRCWYRCRILEY). Polar residues predominate over residues 1808–1821 (QTIVHSPTPSSDTD). Disordered regions lie at residues 1808-1973 (QTIV…GPDF), 2056-2104 (QLDG…PPED), 2116-2160 (NLGG…RTFA), 2279-2356 (VSTF…RCPL), and 2382-2408 (YSAGEASSSEEEPPSPEDKENQVPKRV). Low complexity-rich tracts occupy residues 1872-1890 (PLGGVSFGPLPSPGSPSSL) and 1923-1933 (RRTSSPLRTSP). Phosphoserine occurs at positions 1926 and 1932. The segment covering 1939-1950 (LSTSVTALTPTS) has biased composition (polar residues). Positions 2058–2068 (DGVDDGTDSEA) are enriched in acidic residues. Residues threonine 2064 and threonine 2079 each carry the phosphothreonine modification. Gly residues predominate over residues 2084–2093 (PGVGRGGVLG). The span at 2140–2153 (NGSQPPQSLSTSPA) shows a compositional bias: polar residues. 2 positions are modified to phosphoserine: serine 2286 and serine 2346. Residues 2409–2490 (GPHLRFEISS…QRCQHYKFRY (82 aa)) enclose the FYR C-terminal domain. Positions 2506–2511 (GAARAE) match the WDR5 interaction motif (WIN) motif. The SET domain occupies 2573–2689 (EAVGVYRSAI…RGEELTYDYK (117 aa)). S-adenosyl-L-methionine contacts are provided by residues histidine 2583, arginine 2585, tyrosine 2627, and 2650-2651 (NH). Positions 2653 and 2701 each coordinate Zn(2+). A Post-SET domain is found at 2697 to 2713 (NKLPCNCGAKRCRRFLN). Asparagine 2702 provides a ligand contact to S-adenosyl-L-methionine. Zn(2+)-binding residues include cysteine 2703 and cysteine 2708.

It belongs to the class V-like SAM-binding methyltransferase superfamily. Histone-lysine methyltransferase family. TRX/MLL subfamily. As to quaternary structure, component of the menin-associated histone methyltransferase complex, at least composed of KMT2B/MLL4, ASH2L, RBBP5, WDR5, DPY30, MEN1; the complex interacts with POLR2A and POLR2B via MEN1. Interacts with NFE2. Interacts with KDM6B. Interacts (via WIN motif) with WDR5. Interacts (via MBM motif) with MEN1.

It is found in the nucleus. It catalyses the reaction L-lysyl(4)-[histone H3] + S-adenosyl-L-methionine = N(6)-methyl-L-lysyl(4)-[histone H3] + S-adenosyl-L-homocysteine + H(+). The catalysed reaction is N(6)-methyl-L-lysyl(4)-[histone H3] + S-adenosyl-L-methionine = N(6),N(6)-dimethyl-L-lysyl(4)-[histone H3] + S-adenosyl-L-homocysteine + H(+). In terms of biological role, histone methyltransferase that catalyzes methyl group transfer from S-adenosyl-L-methionine to the epsilon-amino group of 'Lys-4' of histone H3 (H3K4) via a non-processive mechanism. Part of chromatin remodeling machinery predominantly forms H3K4me1 and H3K4me2 methylation marks at active chromatin sites where transcription and DNA repair take place. Likely plays a redundant role with KMT2C in enriching H3K4me1 marks on primed and active enhancer elements. Plays a central role in beta-globin locus transcription regulation by being recruited by NFE2. Plays an important role in controlling bulk H3K4me during oocyte growth and preimplantation development. Required during the transcriptionally active period of oocyte growth for the establishment and/or maintenance of bulk H3K4 trimethylation (H3K4me3), global transcriptional silencing that preceeds resumption of meiosis, oocyte survival and normal zygotic genome activation. The protein is Histone-lysine N-methyltransferase 2B (Kmt2b) of Mus musculus (Mouse).